Here is a 473-residue protein sequence, read N- to C-terminus: Bactericidal permeability-increasing protein (473 aa).

The signal sequence occupies residues 1–18 (MVLCCWLALVALIPMTLS). Residues 19 to 29 (INPGVKVRLTG) form a central sheet, part 1 region. The interval 28-209 (TGKGLEYGRQ…SDLNPQLKTL (182 aa)) is N-terminal barrel. Cysteines 153 and 192 form a disulfide. A central sheet, part 2 region spans residues 211–275 (VLAKVDQYAE…INNMLYISVS (65 aa)). The interval 225 to 230 (MVSSPT) is cleavage sites for elastase. The tract at residues 276-446 (AFTINSAAFV…LAKGYPLPTL (171 aa)) is C-terminal barrel. A glycan (N-linked (GlcNAc...) asparagine) is linked at Asn365. The segment at 453-472 (NTELQVLKDYMLIGTDVQFT) is central sheet, part 3.

Belongs to the BPI/LBP/Plunc superfamily. BPI/LBP family. Monomer. Homodimer; disulfide-linked. Expressed in spleen. Lower expression in gill, head kidney, entire kidney, skin, intestine and blood and lowest expression in liver and muscle.

It is found in the secreted. Its function is as follows. The cytotoxic action of BPI is limited to many species of Gram-negative bacteria; this specificity may be explained by a strong affinity of the very basic N-terminal half for the negatively charged lipopolysaccharides that are unique to the Gram-negative bacterial outer envelope. Exhibits neutralizing capacity towards P.aeruginosa lipopolysaccharides (LPS) and has bactericidal activity against multiple drug resistant (MDR) P.aeruginosa strains derived from people with cystic fibrosis. Has antibacterial activity against E.coli, but not against S.iniae. The polypeptide is Bactericidal permeability-increasing protein (Sebastes schlegelii (Korean rockfish)).